Here is a 259-residue protein sequence, read N- to C-terminus: tRNA (guanine-N(1)-)-methyltransferase (259 aa).

Residues G117 and 137 to 142 (LGDFVL) contribute to the S-adenosyl-L-methionine site.

Belongs to the RNA methyltransferase TrmD family. In terms of assembly, homodimer.

It is found in the cytoplasm. The enzyme catalyses guanosine(37) in tRNA + S-adenosyl-L-methionine = N(1)-methylguanosine(37) in tRNA + S-adenosyl-L-homocysteine + H(+). Specifically methylates guanosine-37 in various tRNAs. This Polaromonas sp. (strain JS666 / ATCC BAA-500) protein is tRNA (guanine-N(1)-)-methyltransferase.